A 669-amino-acid chain; its full sequence is RNA-binding protein 14 (669 aa).

RRM domains are found at residues 1–73 and 79–149; these read MKIF…MSRP and WKIF…LSTK. Residues lysine 126, lysine 135, lysine 138, lysine 149, and lysine 153 each participate in a glycyl lysine isopeptide (Lys-Gly) (interchain with G-Cter in SUMO2) cross-link. Disordered stretches follow at residues 147-175 and 193-232; these read STKGQKKGPGLAVQSGDKTKKPGAGDTAF and NSTGGFDGQARQPTPPFFGRDRSPLRRSPPRASYVAPLTA. Serine 161 carries the post-translational modification Phosphoserine. An N6-acetyllysine; alternate modification is found at lysine 164. Lysine 164 is covalently cross-linked (Glycyl lysine isopeptide (Lys-Gly) (interchain with G-Cter in SUMO2); alternate). Threonine 206 is modified (phosphothreonine). A phosphoserine mark is found at serine 220, serine 242, serine 244, serine 256, serine 272, and serine 280. The disordered stretch occupies residues 284–303; that stretch reads PYRGQLASPSSQSAAASSLG. A compositionally biased stretch (low complexity) spans 287-303; the sequence is GQLASPSSQSAAASSLG. Positions 307-354 are TRBP-interacting domain; interaction with STIL; the sequence is GAQPSASALSSYGGQAAAASSLNSYGAQGSSLASYGNQPSSYGAQAAS. Serine 520, serine 523, serine 527, and serine 562 each carry phosphoserine. The segment at 566 to 592 is disordered; the sequence is VANANSTPPPYERTRLSPPRASYDDPY. Threonine 572 is modified (phosphothreonine). Serine 582 bears the Phosphoserine mark. Lysine 600 is covalently cross-linked (Glycyl lysine isopeptide (Lys-Gly) (interchain with G-Cter in SUMO2)). A phosphoserine mark is found at serine 618, serine 620, serine 623, serine 627, serine 643, and serine 649.

Interacts with NCOA6, CITED1 and XRCC5/KU86. Interacts with SS18. Interacts with STIL and interferes with its interaction with CPAP. Interacts with gamma-tubulin. Part of the HDP-RNP complex composed of at least HEXIM1, PRKDC, XRCC5, XRCC6, paraspeckle proteins (SFPQ, NONO, PSPC1, RBM14, and MATR3) and NEAT1 RNA.

It is found in the nucleus. Its subcellular location is the nucleolus. The protein resides in the cytoplasm. May function as a nuclear receptor coactivator, enhancing transcription through other coactivators such as NCOA6 and CITED1. Regulates centriole biogenesis by suppressing the formation of aberrant centriolar protein complexes in the cytoplasm and thus preserving mitotic spindle integrity. Prevents the formation of the STIL-CPAP complex (which can induce the formation of aberrant centriolar protein complexes) by interfering with the interaction of STIL with CPAP. Plays a role in the regulation of DNA virus-mediated innate immune response by assembling into the HDP-RNP complex, a complex that serves as a platform for IRF3 phosphorylation and subsequent innate immune response activation through the cGAS-STING pathway. The sequence is that of RNA-binding protein 14 (RBM14) from Pongo abelii (Sumatran orangutan).